The sequence spans 317 residues: MSIKDHLSISSEVRKALAGGRPVVALESTIITHGMPYPQNLEMVRRVEAVVRRNGAVPATIAIMDGKLRVGVKGEDLERLARGGGKAAKASRRDVAALLVLGGMAGTTVATTMMAAAWAGIQVFATGGIGGVHRGAETTFDISADLEELSQTQVAVVCAGAKSILDIPKTLETLETHGVPVLGYKTEDFPAFWARQSGQKVDHRIESAEEAARVIALQFELGMGGVLVANPIPESHAMDARAIEARIEEAIRCAEAEGVSRKDLTPFLLKRIFELTEGKSLIANIALVENNAAVAAEIATAMSELGAKSKSKSKAKA.

E27 (proton donor) is an active-site residue. Substrate contacts are provided by K89 and V109. D141 is a Mn(2+) binding site. Residue 143-145 coordinates substrate; the sequence is SAD. The active-site Nucleophile is the K162.

This sequence belongs to the pseudouridine-5'-phosphate glycosidase family. In terms of assembly, homotrimer. The cofactor is Mn(2+).

It catalyses the reaction D-ribose 5-phosphate + uracil = psi-UMP + H2O. Its function is as follows. Catalyzes the reversible cleavage of pseudouridine 5'-phosphate (PsiMP) to ribose 5-phosphate and uracil. Functions biologically in the cleavage direction, as part of a pseudouridine degradation pathway. This Sorangium cellulosum (strain So ce56) (Polyangium cellulosum (strain So ce56)) protein is Pseudouridine-5'-phosphate glycosidase.